Consider the following 79-residue polypeptide: Acyl carrier protein (79 aa).

One can recognise a Carrier domain in the interval 2-77 (SDIEARVKKI…LAIDYAKNNV (76 aa)). Ser37 carries the O-(pantetheine 4'-phosphoryl)serine modification.

The protein belongs to the acyl carrier protein (ACP) family. 4'-phosphopantetheine is transferred from CoA to a specific serine of apo-ACP by AcpS. This modification is essential for activity because fatty acids are bound in thioester linkage to the sulfhydryl of the prosthetic group.

Its subcellular location is the cytoplasm. It participates in lipid metabolism; fatty acid biosynthesis. In terms of biological role, carrier of the growing fatty acid chain in fatty acid biosynthesis. In Leptothrix cholodnii (strain ATCC 51168 / LMG 8142 / SP-6) (Leptothrix discophora (strain SP-6)), this protein is Acyl carrier protein.